Consider the following 320-residue polypeptide: MINSKSKKKESNALVLKSLLREPYNKVCADCKRNEQPRWASWNLGVFICIRCSGVHRSLGVHVSRVKSVDLDSWTDEQTENMTRWGNERANLYWEAKLAGGHVPSDSKIATFIKTKYEFKKWVLYPEIPSPETLKPEQNTRPVSEVNASLDLNTASRSSSAHSVKSTSSATVTNVTSKKEAISATTSLAQSSPNLASLSKQPSTVHAPSTRQRDLKSSILSLYASPRPQVSSSSITTNATYQNLPSPVSTSTTSSQPYGAFHQPATTGSSFVADKWKMPMFTSNVTSAQPSARASPVQSNSSRPRSSLDSKIINSHDVWK.

In terms of domain architecture, Arf-GAP spans 13-132; that stretch reads ALVLKSLLRE…VLYPEIPSPE (120 aa). The segment at 28–52 adopts a C4-type zinc-finger fold; it reads CADCKRNEQPRWASWNLGVFICIRC. 3 disordered regions span residues 153 to 212, 227 to 261, and 284 to 320; these read NTAS…STRQ, RPQV…YGAF, and NVTS…DVWK. Positions 154 to 176 are enriched in low complexity; sequence TASRSSSAHSVKSTSSATVTNVT. Polar residues-rich tracts occupy residues 183–210 and 228–244; these read SATT…APST and PQVS…YQNL. Composition is skewed to low complexity over residues 245–257 and 295–310; these read PSPV…SSQP and SPVQ…SLDS.

The protein resides in the cytoplasm. It localises to the golgi apparatus. Functionally, GTPase-activating protein for the ADP ribosylation factor family. This is an uncharacterized protein from Schizosaccharomyces pombe (strain 972 / ATCC 24843) (Fission yeast).